The primary structure comprises 133 residues: MPNIVEIAVSDERFSTLVTAVTAANLVDVLQSPGPFTVFAPTDTAFAKLPPGTITTLVQNIPQLARILTYHVVAGKFTQADLCRLSTVDSVEGSPIAIDCTEGFEVKNATVIIPDIEADNGIIHVIDNVILMG.

The FAS1 domain maps to 1 to 130; sequence MPNIVEIAVS…GIIHVIDNVI (130 aa).

This is an uncharacterized protein from Synechocystis sp. (strain ATCC 27184 / PCC 6803 / Kazusa).